The chain runs to 883 residues: Protein argonaute 16 (883 aa).

The PAZ domain occupies 254 to 366 (PVFDFLLTNQ…VPIELCHMVS (113 aa)). The Piwi domain maps to 535–844 (FLLCVLPERK…AAAQMGQFMK (310 aa)).

This sequence belongs to the argonaute family. Ago subfamily.

Probably involved in the RNA silencing pathway. May bind to short RNAs such as microRNAs (miRNAs) or short interfering RNAs (siRNAs), and represses the translation of mRNAs which are complementary to them. The polypeptide is Protein argonaute 16 (AGO16) (Oryza sativa subsp. japonica (Rice)).